We begin with the raw amino-acid sequence, 687 residues long: DNA-directed RNA polymerase subunit beta' (687 aa).

The Zn(2+) site is built by Cys69, Cys71, Cys87, and Cys90. Mg(2+)-binding residues include Asp492, Asp494, and Asp496.

Belongs to the RNA polymerase beta' chain family. RpoC1 subfamily. In plastids the minimal PEP RNA polymerase catalytic core is composed of four subunits: alpha, beta, beta', and beta''. When a (nuclear-encoded) sigma factor is associated with the core the holoenzyme is formed, which can initiate transcription. It depends on Mg(2+) as a cofactor. Zn(2+) is required as a cofactor.

It is found in the plastid. The protein localises to the chloroplast. It carries out the reaction RNA(n) + a ribonucleoside 5'-triphosphate = RNA(n+1) + diphosphate. Its function is as follows. DNA-dependent RNA polymerase catalyzes the transcription of DNA into RNA using the four ribonucleoside triphosphates as substrates. The chain is DNA-directed RNA polymerase subunit beta' from Silene latifolia (White campion).